The primary structure comprises 443 residues: Tubulin beta chain (443 aa).

The GTP site is built by Gln11, Glu69, Ser138, Gly142, Thr143, Gly144, Asn204, and Asn226. Glu69 contacts Mg(2+). The tract at residues 421–443 (EYQQYQDASAEEEGEFGEEEEEN) is disordered. Residues 429 to 443 (SAEEEGEFGEEEEEN) show a composition bias toward acidic residues.

It belongs to the tubulin family. Dimer of alpha and beta chains. A typical microtubule is a hollow water-filled tube with an outer diameter of 25 nm and an inner diameter of 15 nM. Alpha-beta heterodimers associate head-to-tail to form protofilaments running lengthwise along the microtubule wall with the beta-tubulin subunit facing the microtubule plus end conferring a structural polarity. Microtubules usually have 13 protofilaments but different protofilament numbers can be found in some organisms and specialized cells. Requires Mg(2+) as cofactor.

Its subcellular location is the cytoplasm. It is found in the cytoskeleton. Tubulin is the major constituent of microtubules, a cylinder consisting of laterally associated linear protofilaments composed of alpha- and beta-tubulin heterodimers. Microtubules grow by the addition of GTP-tubulin dimers to the microtubule end, where a stabilizing cap forms. Below the cap, tubulin dimers are in GDP-bound state, owing to GTPase activity of alpha-tubulin. In Polytomella agilis (Quadriflagellate alga), this protein is Tubulin beta chain (TUBB1).